Reading from the N-terminus, the 575-residue chain is Amyloid-beta A4 precursor protein-binding family A member 3 (575 aa).

M1 is subject to N-acetylmethionine. Over residues 1–10 (MDFPTISRSP) the composition is skewed to polar residues. Disordered stretches follow at residues 1-50 (MDFP…LSRM) and 118-211 (CEEC…GPCD). Position 11 is a phosphoserine (S11). Positions 143 to 153 (EDPDEDSDSPE) are enriched in acidic residues. Over residues 156–184 (EGASAEQEGSRSSSSSPEPWLETVPLVTP) the composition is skewed to low complexity. S171 carries the phosphoserine modification. The tract at residues 215–364 (LLDGVIFGAR…QFLRESGIDP (150 aa)) is required for interaction with NECAB3. The PID domain maps to 217–381 (DGVIFGARYL…SPGACHLHNG (165 aa)). Residue S372 is modified to Phosphoserine. 2 PDZ domains span residues 394–480 (EVHL…IVHC) and 485–560 (TAII…TMPA).

As to quaternary structure, binds to the cytoplasmic domain of amyloid protein (APP) in vivo. Interacts with HIF1AN (via N-terminus). Interacts with NECAB3; seems to mediate the interaction between NECAB3 and HIF1AN. In terms of tissue distribution, expressed in all tissues examined with lower levels in brain and testis.

It localises to the cytoplasm. It is found in the perinuclear region. May modulate processing of the amyloid-beta precursor protein (APP) and hence formation of APP-beta. May enhance the activity of HIF1A in macrophages by inhibiting the activity of HIF1AN. The sequence is that of Amyloid-beta A4 precursor protein-binding family A member 3 (APBA3) from Homo sapiens (Human).